The chain runs to 134 residues: uncharacterized protein (134 aa).

The next 3 membrane-spanning stretches (helical) occupy residues 8 to 28, 54 to 74, and 113 to 133; these read FTSLMLTCANIMLQMYFTVMY, GFQAFSALLLLLSGAWITFLL, and LACFAVFFFVYLFLFVSRLVD.

Belongs to the cornichon family.

It localises to the endoplasmic reticulum membrane. This is an uncharacterized protein from Schizosaccharomyces pombe (strain 972 / ATCC 24843) (Fission yeast).